The sequence spans 520 residues: Maturase K (520 aa).

It belongs to the intron maturase 2 family. MatK subfamily.

Its subcellular location is the plastid. The protein resides in the chloroplast. In terms of biological role, usually encoded in the trnK tRNA gene intron. Probably assists in splicing its own and other chloroplast group II introns. This chain is Maturase K, found in Aspidistra elatior (Cast-iron plant).